The sequence spans 489 residues: UDP-N-acetylmuramate--L-alanine ligase (489 aa).

An ATP-binding site is contributed by 128 to 134; sequence GTHGKTT.

Belongs to the MurCDEF family.

The protein localises to the cytoplasm. The enzyme catalyses UDP-N-acetyl-alpha-D-muramate + L-alanine + ATP = UDP-N-acetyl-alpha-D-muramoyl-L-alanine + ADP + phosphate + H(+). It functions in the pathway cell wall biogenesis; peptidoglycan biosynthesis. Its function is as follows. Cell wall formation. In Shewanella woodyi (strain ATCC 51908 / MS32), this protein is UDP-N-acetylmuramate--L-alanine ligase.